We begin with the raw amino-acid sequence, 281 residues long: Fibrinogen-like protein 1-like protein (281 aa).

An N-terminal signal peptide occupies residues M1–A33. The region spanning T34–M246 is the Fibrinogen C-terminal domain. Intrachain disulfides connect C43/C69 and C201/C213. The segment covering P260 to P269 has biased composition (low complexity). The interval P260–Q281 is disordered. Polar residues predominate over residues I270–Q281.

Expressed in smal intestine, colon and lung.

Shows a cytidine deaminase activity on 2'-deoxycytidine (in vitro), however shows no RNA editing activity (in vitro). The polypeptide is Fibrinogen-like protein 1-like protein (Gallus gallus (Chicken)).